The following is a 208-amino-acid chain: FMN-dependent NADH:quinone oxidoreductase 2 (208 aa).

The protein belongs to the azoreductase type 1 family. Homodimer. It depends on FMN as a cofactor.

The catalysed reaction is 2 a quinone + NADH + H(+) = 2 a 1,4-benzosemiquinone + NAD(+). The enzyme catalyses N,N-dimethyl-1,4-phenylenediamine + anthranilate + 2 NAD(+) = 2-(4-dimethylaminophenyl)diazenylbenzoate + 2 NADH + 2 H(+). In terms of biological role, quinone reductase that provides resistance to thiol-specific stress caused by electrophilic quinones. Functionally, also exhibits azoreductase activity. Catalyzes the reductive cleavage of the azo bond in aromatic azo compounds to the corresponding amines. The protein is FMN-dependent NADH:quinone oxidoreductase 2 of Bacillus cereus (strain ATCC 10987 / NRS 248).